The chain runs to 369 residues: Glutamate 5-kinase (369 aa).

An ATP-binding site is contributed by K9. Substrate-binding residues include S49, D136, and N148. Residues 168–169 (TD) and 210–216 (TGGMLTK) each bind ATP. Residues 275–355 (QGSIWVDKGA…KGVLIYRDDW (81 aa)) enclose the PUA domain.

The protein belongs to the glutamate 5-kinase family.

It localises to the cytoplasm. The catalysed reaction is L-glutamate + ATP = L-glutamyl 5-phosphate + ADP. It participates in amino-acid biosynthesis; L-proline biosynthesis; L-glutamate 5-semialdehyde from L-glutamate: step 1/2. Catalyzes the transfer of a phosphate group to glutamate to form L-glutamate 5-phosphate. In Streptococcus pneumoniae (strain ATCC 700669 / Spain 23F-1), this protein is Glutamate 5-kinase.